The primary structure comprises 149 residues: Cytochrome c-type biogenesis protein CcmE (149 aa).

At 1–7 (MKKRHQR) the chain is on the cytoplasmic side. Residues 8–28 (LFLVLGVVAGVSVATALVLNA) form a helical; Signal-anchor for type II membrane protein membrane-spanning segment. Residues 29–149 (FRDNMTFFIT…EHSVDEVGDY (121 aa)) lie on the Periplasmic side of the membrane. Heme contacts are provided by His-123 and Tyr-127.

This sequence belongs to the CcmE/CycJ family.

Its subcellular location is the cell inner membrane. Its function is as follows. Heme chaperone required for the biogenesis of c-type cytochromes. Transiently binds heme delivered by CcmC and transfers the heme to apo-cytochromes in a process facilitated by CcmF and CcmH. This is Cytochrome c-type biogenesis protein CcmE from Halorhodospira halophila (strain DSM 244 / SL1) (Ectothiorhodospira halophila (strain DSM 244 / SL1)).